The following is a 225-amino-acid chain: tRNA (guanine-N(1)-)-methyltransferase (225 aa).

S-adenosyl-L-methionine contacts are provided by residues G112 and 132 to 137 (IGDYVL).

This sequence belongs to the RNA methyltransferase TrmD family. Homodimer.

The protein localises to the cytoplasm. The enzyme catalyses guanosine(37) in tRNA + S-adenosyl-L-methionine = N(1)-methylguanosine(37) in tRNA + S-adenosyl-L-homocysteine + H(+). Its function is as follows. Specifically methylates guanosine-37 in various tRNAs. In Bacteroides thetaiotaomicron (strain ATCC 29148 / DSM 2079 / JCM 5827 / CCUG 10774 / NCTC 10582 / VPI-5482 / E50), this protein is tRNA (guanine-N(1)-)-methyltransferase.